Reading from the N-terminus, the 700-residue chain is Phenoloxidase 8 (700 aa).

A propeptide spanning residues 1–51 (MATLTQKFHGLLQHPLEPLFLPKNDGTLFYDLPERFLTSRYSPIGQNLANR) is cleaved from the precursor. N-linked (GlcNAc...) asparagine glycans are attached at residues N64 and N198. 3 residues coordinate Cu cation: H223, H227, and H252. An N-linked (GlcNAc...) asparagine glycan is attached at N295. E364 functions as the Proton acceptor in the catalytic mechanism. The Cu cation site is built by H379, H383, and H419. N-linked (GlcNAc...) asparagine glycans are attached at residues N445, N507, and N565. 2 disulfides stabilise this stretch: C592–C636 and C594–C643.

It belongs to the tyrosinase family. As to quaternary structure, homodimer. The cofactor is Cu(2+). Post-translationally, upon activation, a trypsin type protease cleaves prophenol oxidase to yield the active enzyme.

Its subcellular location is the secreted. The catalysed reaction is 2 tyramine + O2 = 2 dopamine. It catalyses the reaction 2 dopamine + O2 = 2 dopamine quinone + 2 H2O. In terms of biological role, this is a copper-containing oxidase that functions in the formation of pigments such as melanins and other polyphenolic compounds. Catalyzes the oxidation of o-diphenols such as dopamine. Also oxidizes monophenols such as tyramine. This chain is Phenoloxidase 8, found in Anopheles gambiae (African malaria mosquito).